The chain runs to 75 residues: UPF0512 protein D (75 aa).

Residues 1–20 (MAIFKSISSISNSTGSMGSS) form a disordered region.

This sequence belongs to the UPF0512 family.

This is UPF0512 protein D from Dictyostelium discoideum (Social amoeba).